Here is a 509-residue protein sequence, read N- to C-terminus: Activin receptor type-1 (509 aa).

The signal sequence occupies residues 1–20 (MVDGAMILSVLMMMALPSPS). Residues 21 to 123 (MEDEEPKVNP…FPGSQNFHLE (103 aa)) are Extracellular-facing. Residue asparagine 102 is glycosylated (N-linked (GlcNAc...) asparagine). The chain crosses the membrane as a helical span at residues 124–146 (VGLIILSVVFAVCLFACILGVAL). Residues 147–509 (RKFKRRNQER…NSLDKLKTDC (363 aa)) are Cytoplasmic-facing. The GS domain maps to 178–207 (STLAELLDHSCTSGSGSGLPFLVQRTVARQ). The Protein kinase domain maps to 208 to 502 (ITLLECVGKG…KTLTKIDNSL (295 aa)). Residues 214-222 (VGKGRYGEV) and lysine 235 contribute to the ATP site. Aspartate 336 (proton acceptor) is an active-site residue. Residue serine 501 is modified to Phosphoserine.

Belongs to the protein kinase superfamily. TKL Ser/Thr protein kinase family. TGFB receptor subfamily. As to quaternary structure, interacts with FKBP1A. Interacts with FCHO1. Interacts with CLU. Interacts with type II receptors AMHR2 and ACVR2A. Interacts with BMP7. Interacts with GDF2/BMP9. Interacts with BMP6 (when glycosylated); the interaction may induce HAMP expression. Interacts with TSC22D1/TSC-22. Requires Mg(2+) as cofactor. It depends on Mn(2+) as a cofactor. As to expression, urogenital ridge, testis, ovary, brain and lungs.

It is found in the membrane. It catalyses the reaction L-threonyl-[receptor-protein] + ATP = O-phospho-L-threonyl-[receptor-protein] + ADP + H(+). The enzyme catalyses L-seryl-[receptor-protein] + ATP = O-phospho-L-seryl-[receptor-protein] + ADP + H(+). Bone morphogenetic protein (BMP) type I receptor that is involved in a wide variety of biological processes, including bone, heart, cartilage, nervous, and reproductive system development and regulation. As a type I receptor, forms heterotetrameric receptor complexes with the type II receptors AMHR2, ACVR2A ors ACVR2B. Upon binding of ligands such as BMP7 or GDF2/BMP9 to the heteromeric complexes, type II receptors transphosphorylate ACVR1 intracellular domain. In turn, ACVR1 kinase domain is activated and subsequently phosphorylates SMAD1/5/8 proteins that transduce the signal. In addition to its role in mediating BMP pathway-specific signaling, suppresses TGFbeta/activin pathway signaling by interfering with the binding of activin to its type II receptor. Besides canonical SMAD signaling, can activate non-canonical pathways such as p38 mitogen-activated protein kinases/MAPKs. May promote the expression of HAMP, potentially via its interaction with BMP6. The protein is Activin receptor type-1 (Acvr1) of Rattus norvegicus (Rat).